Reading from the N-terminus, the 93-residue chain is MLKHNSYFNGNVQSVGFERHGRRQTVGVIDTGEFHFSTDAPERMTVVAGELAIRVDGSTEWRAYPAGTSFEVAGKSGFDVRATQPAGYLCEFL.

This sequence belongs to the nucleoside phosphorylase PpnP family.

It carries out the reaction a purine D-ribonucleoside + phosphate = a purine nucleobase + alpha-D-ribose 1-phosphate. The enzyme catalyses adenosine + phosphate = alpha-D-ribose 1-phosphate + adenine. It catalyses the reaction cytidine + phosphate = cytosine + alpha-D-ribose 1-phosphate. The catalysed reaction is guanosine + phosphate = alpha-D-ribose 1-phosphate + guanine. It carries out the reaction inosine + phosphate = alpha-D-ribose 1-phosphate + hypoxanthine. The enzyme catalyses thymidine + phosphate = 2-deoxy-alpha-D-ribose 1-phosphate + thymine. It catalyses the reaction uridine + phosphate = alpha-D-ribose 1-phosphate + uracil. The catalysed reaction is xanthosine + phosphate = alpha-D-ribose 1-phosphate + xanthine. In terms of biological role, catalyzes the phosphorolysis of diverse nucleosides, yielding D-ribose 1-phosphate and the respective free bases. Can use uridine, adenosine, guanosine, cytidine, thymidine, inosine and xanthosine as substrates. Also catalyzes the reverse reactions. This is Pyrimidine/purine nucleoside phosphorylase from Sorangium cellulosum (strain So ce56) (Polyangium cellulosum (strain So ce56)).